The chain runs to 96 residues: Aspartyl/glutamyl-tRNA(Asn/Gln) amidotransferase subunit C (96 aa).

The protein belongs to the GatC family. As to quaternary structure, heterotrimer of A, B and C subunits.

It carries out the reaction L-glutamyl-tRNA(Gln) + L-glutamine + ATP + H2O = L-glutaminyl-tRNA(Gln) + L-glutamate + ADP + phosphate + H(+). The catalysed reaction is L-aspartyl-tRNA(Asn) + L-glutamine + ATP + H2O = L-asparaginyl-tRNA(Asn) + L-glutamate + ADP + phosphate + 2 H(+). Allows the formation of correctly charged Asn-tRNA(Asn) or Gln-tRNA(Gln) through the transamidation of misacylated Asp-tRNA(Asn) or Glu-tRNA(Gln) in organisms which lack either or both of asparaginyl-tRNA or glutaminyl-tRNA synthetases. The reaction takes place in the presence of glutamine and ATP through an activated phospho-Asp-tRNA(Asn) or phospho-Glu-tRNA(Gln). This chain is Aspartyl/glutamyl-tRNA(Asn/Gln) amidotransferase subunit C, found in Trichormus variabilis (strain ATCC 29413 / PCC 7937) (Anabaena variabilis).